The following is a 638-amino-acid chain: Methionine--tRNA ligase (638 aa).

The 'HIGH' region motif lies at 12–22; sequence YYPSDKLHIGH. Cys127, Cys130, Cys144, and Cys147 together coordinate Zn(2+). A 'KMSKS' region motif is present at residues 296-300; that stretch reads KMSKS. Lys299 contributes to the ATP binding site. Residues 538-638 form the tRNA-binding domain; it reads DFSKVQLRVA…KDIESGSKIS (101 aa).

It belongs to the class-I aminoacyl-tRNA synthetase family. MetG type 2A subfamily. In terms of assembly, homodimer. Zn(2+) serves as cofactor.

The protein resides in the cytoplasm. The enzyme catalyses tRNA(Met) + L-methionine + ATP = L-methionyl-tRNA(Met) + AMP + diphosphate. In terms of biological role, is required not only for elongation of protein synthesis but also for the initiation of all mRNA translation through initiator tRNA(fMet) aminoacylation. In Caldanaerobacter subterraneus subsp. tengcongensis (strain DSM 15242 / JCM 11007 / NBRC 100824 / MB4) (Thermoanaerobacter tengcongensis), this protein is Methionine--tRNA ligase (metG).